The sequence spans 301 residues: GTPase Era (301 aa).

One can recognise an Era-type G domain in the interval 4-173 (KAGFVALIGK…LECISKYLSP (170 aa)). Residues 12–19 (GKPNAGKS) form a G1 region. Residue 12–19 (GKPNAGKS) coordinates GTP. The G2 stretch occupies residues 38 to 42 (NATRK). The segment at 64 to 67 (DTPG) is G3. Residues 64-68 (DTPGL) and 122-125 (SKID) each bind GTP. Positions 122–125 (SKID) are G4. Residues 152–154 (LSA) form a G5 region. Positions 204–280 (LSDEIPYESD…FLNLQVIAQK (77 aa)) constitute a KH type-2 domain.

Belongs to the TRAFAC class TrmE-Era-EngA-EngB-Septin-like GTPase superfamily. Era GTPase family. In terms of assembly, monomer.

It localises to the cytoplasm. The protein localises to the cell inner membrane. Functionally, an essential GTPase that binds both GDP and GTP, with rapid nucleotide exchange. Plays a role in 16S rRNA processing and 30S ribosomal subunit biogenesis and possibly also in cell cycle regulation and energy metabolism. This is GTPase Era from Helicobacter pylori (strain G27).